The following is a 106-amino-acid chain: BLOC-1-related complex subunit 7 (106 aa).

This sequence belongs to the BORCS7 family. As to quaternary structure, component of the BLOC-one-related complex (BORC) which is composed of BLOC1S1, BLOC1S2, BORCS5, BORCS6, BORCS7, BORCS8, KXD1 and SNAPIN.

The protein resides in the lysosome membrane. Functionally, as part of the BORC complex may play a role in lysosomes movement and localization at the cell periphery. Associated with the cytosolic face of lysosomes, the BORC complex may recruit ARL8B and couple lysosomes to microtubule plus-end-directed kinesin motor. The sequence is that of BLOC-1-related complex subunit 7 from Pongo abelii (Sumatran orangutan).